Consider the following 603-residue polypeptide: uncharacterized protein (603 aa).

The tract at residues 257–281 (AGEAASSDHDQKISRVTRKRPREPK) is disordered.

This is an uncharacterized protein from Saccharomyces cerevisiae (strain ATCC 204508 / S288c) (Baker's yeast).